Here is a 107-residue protein sequence, read N- to C-terminus: Ribonuclease P protein component 4 (107 aa).

Cys62, Cys65, Cys87, and Cys90 together coordinate Zn(2+).

Belongs to the eukaryotic/archaeal RNase P protein component 4 family. As to quaternary structure, consists of a catalytic RNA component and at least 4-5 protein subunits. Zn(2+) is required as a cofactor.

The protein resides in the cytoplasm. The enzyme catalyses Endonucleolytic cleavage of RNA, removing 5'-extranucleotides from tRNA precursor.. Its function is as follows. Part of ribonuclease P, a protein complex that generates mature tRNA molecules by cleaving their 5'-ends. The chain is Ribonuclease P protein component 4 from Archaeoglobus fulgidus (strain ATCC 49558 / DSM 4304 / JCM 9628 / NBRC 100126 / VC-16).